Consider the following 259-residue polypeptide: Phosphoribosylaminoimidazole-succinocarboxamide synthase (259 aa).

Belongs to the SAICAR synthetase family.

The catalysed reaction is 5-amino-1-(5-phospho-D-ribosyl)imidazole-4-carboxylate + L-aspartate + ATP = (2S)-2-[5-amino-1-(5-phospho-beta-D-ribosyl)imidazole-4-carboxamido]succinate + ADP + phosphate + 2 H(+). It functions in the pathway purine metabolism; IMP biosynthesis via de novo pathway; 5-amino-1-(5-phospho-D-ribosyl)imidazole-4-carboxamide from 5-amino-1-(5-phospho-D-ribosyl)imidazole-4-carboxylate: step 1/2. The protein is Phosphoribosylaminoimidazole-succinocarboxamide synthase of Hyphomonas neptunium (strain ATCC 15444).